A 216-amino-acid chain; its full sequence is Nucleoid occlusion factor SlmA (216 aa).

Residues 1-23 (MAEQLTLDSIEPEPEKQSAKIEK) are disordered. Residues 13 to 23 (EPEKQSAKIEK) show a composition bias toward basic and acidic residues. The region spanning 28-88 (ERRQQVLTVL…ALIENIESSL (61 aa)) is the HTH tetR-type domain. A DNA-binding region (H-T-H motif) is located at residues 51-70 (TTARLAKEVGVSEAALYRYF).

It belongs to the nucleoid occlusion factor SlmA family. As to quaternary structure, homodimer. Interacts with FtsZ.

Its subcellular location is the cytoplasm. The protein resides in the nucleoid. Functionally, required for nucleoid occlusion (NO) phenomenon, which prevents Z-ring formation and cell division over the nucleoid. Acts as a DNA-associated cell division inhibitor that binds simultaneously chromosomal DNA and FtsZ, and disrupts the assembly of FtsZ polymers. SlmA-DNA-binding sequences (SBS) are dispersed on non-Ter regions of the chromosome, preventing FtsZ polymerization at these regions. The protein is Nucleoid occlusion factor SlmA of Mannheimia succiniciproducens (strain KCTC 0769BP / MBEL55E).